The chain runs to 67 residues: SPbeta prophage-derived uncharacterized protein YoqK (67 aa).

The chain is SPbeta prophage-derived uncharacterized protein YoqK (yoqK) from Bacillus subtilis (strain 168).